The following is a 396-amino-acid chain: Elongation factor Tu-B (396 aa).

One can recognise a tr-type G domain in the interval 10 to 206 (KLHVNVGTIG…ALDTFIPDPT (197 aa)). Residues 19 to 26 (GHVDHGKT) are G1. Position 19–26 (19–26 (GHVDHGKT)) interacts with GTP. Threonine 26 lines the Mg(2+) pocket. The tract at residues 60–64 (GITIS) is G2. The tract at residues 81-84 (DCPG) is G3. GTP is bound by residues 81–85 (DCPGH) and 136–139 (NKAD). The segment at 136 to 139 (NKAD) is G4. The tract at residues 174-176 (SAR) is G5.

Belongs to the TRAFAC class translation factor GTPase superfamily. Classic translation factor GTPase family. EF-Tu/EF-1A subfamily. In terms of assembly, monomer.

The protein resides in the cytoplasm. It carries out the reaction GTP + H2O = GDP + phosphate + H(+). In terms of biological role, GTP hydrolase that promotes the GTP-dependent binding of aminoacyl-tRNA to the A-site of ribosomes during protein biosynthesis. The sequence is that of Elongation factor Tu-B from Xanthomonas campestris pv. campestris (strain ATCC 33913 / DSM 3586 / NCPPB 528 / LMG 568 / P 25).